A 181-amino-acid polypeptide reads, in one-letter code: MKKFKCVVCGYIYTGEDAPEKCPVCGAGKDKFVEVKDEGEGWADEHKIGVAKGVDKEVLEGLRANFTGECTEVGMYLAMARQADREGYPEVAEAYKRIAFEEAEHASKFAELLGEVVVADTKTNLQMRVDAEKGACEGKKELATLAKKLNYDAIHDTVHEMCKDEARHGSAFRGLLNRYFK.

The Rubredoxin-like domain maps to 1 to 35; sequence MKKFKCVVCGYIYTGEDAPEKCPVCGAGKDKFVEV. Cys6, Cys9, Cys22, Cys25, Glu69, Glu102, Glu132, Glu165, and His168 together coordinate Fe cation. The Ferritin-like diiron domain occupies 52–181; the sequence is KGVDKEVLEG…FRGLLNRYFK (130 aa).

As to quaternary structure, homodimer. Requires Fe(3+) as cofactor.

It carries out the reaction H2O2 + NADH + H(+) = NAD(+) + 2 H2O. Functionally, functions as the terminal component of an NADH peroxidase (NADH:H(2)O(2) oxidoreductase) when using NADH:rubredoxin oxidoreductase (NROR) and rubredoxin (Rd) as electron transport intermediaries from NADH to revRbr 1. Plays an important role in the oxidative stress defense system in C.acetobutylicum, an obligate anaerobic bacterium. Also exhibits NADH oxidase (NADH:O(2) oxidoreductase) activity in vitro, which is 100-fold lesser than that of FprA1/2 using the same electron transfer components. Therefore, its predominant function is most likely as a scavenger of its preferred substrate, H(2)O(2). The protein is Reverse rubrerythrin-1 (rbr3A) of Clostridium acetobutylicum (strain ATCC 824 / DSM 792 / JCM 1419 / IAM 19013 / LMG 5710 / NBRC 13948 / NRRL B-527 / VKM B-1787 / 2291 / W).